Consider the following 92-residue polypeptide: MGRSLKKGPFIADHLLSKIEKLNDRNEKQVIKTWSRASTILPLMVGHTIAVHNGRQHVPVFISEQMVGHKLGEFAPTRTYRGHGKSDKKAGR.

Belongs to the universal ribosomal protein uS19 family.

Functionally, protein S19 forms a complex with S13 that binds strongly to the 16S ribosomal RNA. This Nostoc sp. (strain PCC 7120 / SAG 25.82 / UTEX 2576) protein is Small ribosomal subunit protein uS19.